A 125-amino-acid polypeptide reads, in one-letter code: Holo-[acyl-carrier-protein] synthase (125 aa).

Positions 8 and 57 each coordinate Mg(2+).

The protein belongs to the P-Pant transferase superfamily. AcpS family. Mg(2+) is required as a cofactor.

It is found in the cytoplasm. The enzyme catalyses apo-[ACP] + CoA = holo-[ACP] + adenosine 3',5'-bisphosphate + H(+). In terms of biological role, transfers the 4'-phosphopantetheine moiety from coenzyme A to a Ser of acyl-carrier-protein. The chain is Holo-[acyl-carrier-protein] synthase from Blochmanniella floridana.